Reading from the N-terminus, the 306-residue chain is Curved DNA-binding protein (306 aa).

The region spanning Asp-5–Trp-69 is the J domain.

The protein resides in the cytoplasm. It localises to the nucleoid. DNA-binding protein that preferentially recognizes a curved DNA sequence. It is probably a functional analog of DnaJ; displays overlapping activities with DnaJ, but functions under different conditions, probably acting as a molecular chaperone in an adaptive response to environmental stresses other than heat shock. Lacks autonomous chaperone activity; binds native substrates and targets them for recognition by DnaK. Its activity is inhibited by the binding of CbpM. The chain is Curved DNA-binding protein from Escherichia coli O17:K52:H18 (strain UMN026 / ExPEC).